The chain runs to 149 residues: Pleckstrin homology domain-containing family J member 1 (149 aa).

Residues 15–108 (RAEKAAELGM…WVEALTNASY (94 aa)) form the PH domain.

This Xenopus laevis (African clawed frog) protein is Pleckstrin homology domain-containing family J member 1 (plekhj1).